The sequence spans 75 residues: Small ribosomal subunit protein bS18 (75 aa).

It belongs to the bacterial ribosomal protein bS18 family. As to quaternary structure, part of the 30S ribosomal subunit. Forms a tight heterodimer with protein bS6.

Binds as a heterodimer with protein bS6 to the central domain of the 16S rRNA, where it helps stabilize the platform of the 30S subunit. This is Small ribosomal subunit protein bS18 from Vibrio atlanticus (strain LGP32) (Vibrio splendidus (strain Mel32)).